The following is a 274-amino-acid chain: Exosome complex component RRP40 (274 aa).

Position 2 is an N-acetylalanine (alanine 2). Residue lysine 150 forms a Glycyl lysine isopeptide (Lys-Gly) (interchain with G-Cter in SUMO2) linkage.

It belongs to the RRP40 family. In terms of assembly, component of the RNA exosome core complex (Exo-9), composed of EXOSC1, EXOSC2, EXOSC3, EXOSC4, EXOSC5, EXOSC6, EXOSC7, EXOSC8 and EXOSC9; within the complex interacts with EXOSC5 and EXOSC9. The catalytically inactive RNA exosome core complex (Exo-9) associates with the catalytic subunit EXOSC10/RRP6. Exo-9 may associate with DIS3 to form the nucleolar exosome complex, or DIS3L to form the cytoplasmic exosome complex. Exo-9 is formed by a hexameric base ring consisting of the heterodimers EXOSC4-EXOSC9, EXOSC5-EXOSC8 and EXOSC6-EXOSC7, and a cap ring consisting of EXOSC1, EXOSC2 and EXOSC3. The RNA exosome complex associates with cofactors C1D/RRP47, MPHOSPH6/MPP6 and MTREX/MTR4. Interacts with MPHOSPH6/MPP6; the interaction is direct. Interacts with GTPBP1. Interacts with ZC3HAV1. Interacts with DDX17 only in the presence of ZC3HAV1 in an RNA-independent manner. Interacts with DHX36; this interaction occurs in a RNase-insensitive manner. Interacts with HBS1L isoform 2.

The protein resides in the cytoplasm. The protein localises to the nucleus. It is found in the nucleolus. In terms of biological role, non-catalytic component of the RNA exosome complex which has 3'-&gt;5' exoribonuclease activity and participates in a multitude of cellular RNA processing and degradation events. In the nucleus, the RNA exosome complex is involved in proper maturation of stable RNA species such as rRNA, snRNA and snoRNA, in the elimination of RNA processing by-products and non-coding 'pervasive' transcripts, such as antisense RNA species and promoter-upstream transcripts (PROMPTs), and of mRNAs with processing defects, thereby limiting or excluding their export to the cytoplasm. The RNA exosome may be involved in Ig class switch recombination (CSR) and/or Ig variable region somatic hypermutation (SHM) by targeting AICDA deamination activity to transcribed dsDNA substrates. In the cytoplasm, the RNA exosome complex is involved in general mRNA turnover and specifically degrades inherently unstable mRNAs containing AU-rich elements (AREs) within their 3' untranslated regions, and in RNA surveillance pathways, preventing translation of aberrant mRNAs. It seems to be involved in degradation of histone mRNA. The catalytic inactive RNA exosome core complex of 9 subunits (Exo-9) is proposed to play a pivotal role in the binding and presentation of RNA for ribonucleolysis, and to serve as a scaffold for the association with catalytic subunits and accessory proteins or complexes. EXOSC3 as peripheral part of the Exo-9 complex stabilizes the hexameric ring of RNase PH-domain subunits through contacts with EXOSC9 and EXOSC5. The chain is Exosome complex component RRP40 (Exosc3) from Mus musculus (Mouse).